The chain runs to 147 residues: Small ribosomal subunit protein uS5 (147 aa).

An S5 DRBM domain is found at F9–V72.

The protein belongs to the universal ribosomal protein uS5 family. In terms of assembly, part of the 30S ribosomal subunit. Contacts proteins S4 and S8.

Functionally, with S4 and S12 plays an important role in translational accuracy. Located at the back of the 30S subunit body where it stabilizes the conformation of the head with respect to the body. The chain is Small ribosomal subunit protein uS5 from Helicobacter pylori (strain J99 / ATCC 700824) (Campylobacter pylori J99).